A 386-amino-acid polypeptide reads, in one-letter code: Zinc transporter 7-A (386 aa).

The Cytoplasmic portion of the chain corresponds to 1–37; that stretch reads MLPLSIKDDEYKPPKFNLARKVSGWIRSIFSDSTSRN. A helical transmembrane segment spans residues 38–58; that stretch reads LFCFLCLNLSFAFVELFYGIW. Residues 59–67 are Lumenal-facing; that stretch reads SNSLGLISD. The helical transmembrane segment at 68–88 threads the bilayer; sequence SFHMFFDCTALLAGLAASVIS. Over 89–102 the chain is Cytoplasmic; that stretch reads RWKTNEAFSYGYVR. A helical transmembrane segment spans residues 103–123; the sequence is AEVLAGFVNGLFLIFTAFFIF. Residues 124–140 are Lumenal-facing; sequence SEGVERALDTPEVHHER. The helical transmembrane segment at 141–161 threads the bilayer; sequence LLPVSIMGLLVNIIGIFVFQH. The his-rich loop stretch occupies residues 161–222; the sequence is HGGGHGHSHE…GHSHDHSPKH (62 aa). At 162 to 246 the chain is on the cytoplasmic side; that stretch reads GGGHGHSHES…KGSSKQILEG (85 aa). The tract at residues 167 to 239 is disordered; sequence HSHESGHGHS…DEPPEEHKGS (73 aa). Over residues 228-238 the composition is skewed to basic and acidic residues; sequence CHDEPPEEHKG. Residues 247 to 267 traverse the membrane as a helical segment; the sequence is VFLHIVADTLGSVGVIFSTIL. Topologically, residues 268-272 are lumenal; the sequence is MQRYG. A helical transmembrane segment spans residues 273–293; the sequence is LMIADPICSMLIALLIFVSVI. Residues 294-386 lie on the Cytoplasmic side of the membrane; it reads PLLKQSIGIL…LYVQIDFAAI (93 aa).

Belongs to the cation diffusion facilitator (CDF) transporter (TC 2.A.4) family. SLC30A subfamily. Homooligomer.

The protein localises to the golgi apparatus membrane. It localises to the cytoplasmic vesicle. It is found in the golgi apparatus. Its subcellular location is the trans-Golgi network. The protein resides in the sarcoplasmic reticulum. The protein localises to the mitochondrion. It catalyses the reaction Zn(2+)(in) = Zn(2+)(out). Its function is as follows. Zinc ion transporter mediating zinc entry from the cytosol into the lumen of organelles along the secretory pathway. By contributing to zinc ion homeostasis within the early secretory pathway, regulates the activation and folding of enzymes like alkaline phosphatases. This chain is Zinc transporter 7-A (slc30a7-a), found in Xenopus laevis (African clawed frog).